A 119-amino-acid chain; its full sequence is Beta-2-microglobulin (119 aa).

The first 20 residues, 1 to 20, serve as a signal peptide directing secretion; it reads MARFVAVALLVLLSLSGLET. The 90-residue stretch at 25–114 folds into the Ig-like C1-type domain; sequence PKIQVYSRHP…VTFSTPKTVK (90 aa). Cysteine 45 and cysteine 100 are joined by a disulfide.

This sequence belongs to the beta-2-microglobulin family. Heterodimer of an alpha chain and a beta chain. Beta-2-microglobulin is the beta-chain of major histocompatibility complex class I molecules.

The protein localises to the secreted. Component of the class I major histocompatibility complex (MHC). Involved in the presentation of peptide antigens to the immune system. This chain is Beta-2-microglobulin (B2M), found in Callicebus personatus personatus (Masked titi).